Consider the following 344-residue polypeptide: Succinylglutamate desuccinylase (344 aa).

Residues His-63, Glu-66, and His-160 each coordinate Zn(2+). Glu-224 is an active-site residue.

The protein belongs to the AspA/AstE family. Succinylglutamate desuccinylase subfamily. Zn(2+) serves as cofactor.

The catalysed reaction is N-succinyl-L-glutamate + H2O = L-glutamate + succinate. The protein operates within amino-acid degradation; L-arginine degradation via AST pathway; L-glutamate and succinate from L-arginine: step 5/5. In terms of biological role, transforms N(2)-succinylglutamate into succinate and glutamate. This Shewanella sp. (strain MR-7) protein is Succinylglutamate desuccinylase.